Consider the following 158-residue polypeptide: 3-dehydroquinate dehydratase (158 aa).

Tyr22 acts as the Proton acceptor in catalysis. Substrate-binding residues include Asn74, His80, and Asp87. His100 functions as the Proton donor in the catalytic mechanism. Substrate is bound by residues Ile101 to Ser102 and Arg111.

Belongs to the type-II 3-dehydroquinase family. In terms of assembly, homododecamer.

The enzyme catalyses 3-dehydroquinate = 3-dehydroshikimate + H2O. It participates in metabolic intermediate biosynthesis; chorismate biosynthesis; chorismate from D-erythrose 4-phosphate and phosphoenolpyruvate: step 3/7. Functionally, catalyzes a trans-dehydration via an enolate intermediate. The chain is 3-dehydroquinate dehydratase from Helicobacter hepaticus (strain ATCC 51449 / 3B1).